Consider the following 233-residue polypeptide: tRNA (guanine-N(1)-)-methyltransferase (233 aa).

S-adenosyl-L-methionine is bound by residues Gly-110 and 130-135 (IGDYVM).

This sequence belongs to the RNA methyltransferase TrmD family. In terms of assembly, homodimer.

Its subcellular location is the cytoplasm. The catalysed reaction is guanosine(37) in tRNA + S-adenosyl-L-methionine = N(1)-methylguanosine(37) in tRNA + S-adenosyl-L-homocysteine + H(+). Functionally, specifically methylates guanosine-37 in various tRNAs. The polypeptide is tRNA (guanine-N(1)-)-methyltransferase (Finegoldia magna (strain ATCC 29328 / DSM 20472 / WAL 2508) (Peptostreptococcus magnus)).